A 100-amino-acid chain; its full sequence is ESAT-6-like protein EsxT (100 aa).

Belongs to the WXG100 family. ESAT-6 subfamily. Forms a tight 1:1 complex with EsxU.

The protein localises to the secreted. This chain is ESAT-6-like protein EsxT, found in Mycobacterium tuberculosis (strain CDC 1551 / Oshkosh).